The following is a 352-amino-acid chain: Histidine biosynthesis bifunctional protein HisB (352 aa).

Residues 1–164 (MSQKILFIDR…EIENEILSSF (164 aa)) are histidinol-phosphatase. The active-site Nucleophile is the Asp9. Mg(2+) is bound by residues Asp9 and Asp11. Residue Asp11 is the Proton donor of the active site. Zn(2+)-binding residues include Cys93, His95, Cys101, and Cys103. A Mg(2+)-binding site is contributed by Asp130. The tract at residues 165–352 (RSASYQRTTK…ENLASSKGVI (188 aa)) is imidazoleglycerol-phosphate dehydratase.

This sequence in the N-terminal section; belongs to the histidinol-phosphatase family. In the C-terminal section; belongs to the imidazoleglycerol-phosphate dehydratase family. Mg(2+) is required as a cofactor. It depends on Zn(2+) as a cofactor.

The protein resides in the cytoplasm. It catalyses the reaction D-erythro-1-(imidazol-4-yl)glycerol 3-phosphate = 3-(imidazol-4-yl)-2-oxopropyl phosphate + H2O. The catalysed reaction is L-histidinol phosphate + H2O = L-histidinol + phosphate. It functions in the pathway amino-acid biosynthesis; L-histidine biosynthesis; L-histidine from 5-phospho-alpha-D-ribose 1-diphosphate: step 6/9. Its pathway is amino-acid biosynthesis; L-histidine biosynthesis; L-histidine from 5-phospho-alpha-D-ribose 1-diphosphate: step 8/9. This chain is Histidine biosynthesis bifunctional protein HisB, found in Campylobacter jejuni subsp. jejuni serotype O:23/36 (strain 81-176).